A 494-amino-acid polypeptide reads, in one-letter code: Integrin beta-like protein 1 (494 aa).

The signal sequence occupies residues 1-23 (MHPPGFKNFLLLVSSLFFIGLSA). 40 disulfide bridges follow: Cys-40–Cys-71, Cys-51–Cys-69, Cys-63–Cys-74, Cys-76–Cys-89, Cys-91–Cys-112, Cys-96–Cys-110, Cys-104–Cys-115, Cys-117–Cys-126, Cys-132–Cys-159, Cys-143–Cys-157, Cys-151–Cys-162, Cys-164–Cys-178, Cys-180–Cys-202, Cys-185–Cys-200, Cys-194–Cys-205, Cys-207–Cys-216, Cys-220–Cys-247, Cys-231–Cys-245, Cys-239–Cys-250, Cys-252–Cys-269, Cys-271–Cys-296, Cys-276–Cys-294, Cys-288–Cys-299, Cys-301–Cys-310, Cys-316–Cys-343, Cys-327–Cys-341, Cys-335–Cys-346, Cys-348–Cys-361, Cys-363–Cys-384, Cys-368–Cys-382, Cys-376–Cys-387, Cys-389–Cys-398, Cys-404–Cys-431, Cys-415–Cys-429, Cys-423–Cys-434, Cys-436–Cys-448, Cys-450–Cys-471, Cys-455–Cys-469, Cys-463–Cys-474, and Cys-476–Cys-485. I-EGF domains lie at 40–90 (CRLS…PLCE), 91–127 (CHDW…EACQ), 132–179 (CDLT…KFCE), 180–217 (CDDR…DKCE), 220–270 (CDIT…DTCE), 271–311 (CDER…KKCE), 316–362 (CPLS…KTCE), 363–399 (CDDR…KLCQ), 404–449 (CNMT…EFCD), and 450–486 (CDDR…NACE). One copy of the I repeat lies at 51-95 (CRAPGQPPGSALCHDRGRCECGVCICHVTEPGTYFGPLCECHDWV). A cysteine-rich tandem repeats region spans residues 51 to 494 (CRAPGQPPGS…CEIWLGTEYP (444 aa)). One copy of the II repeat lies at 96–142 (CETYDGKTCAGHGTCDCGKCKCDVGWSGEACQYPTKCDLTKKISNQM). Residues 143–184 (CKNSQDVICSNAGTCHCGRCKCDNSDGHGLIYGKFCECDDRE) form an III repeat. The IV repeat unit spans residues 185-230 (CIDDETEEICGGHGKCYCGNCYCEAGWHGDKCEFQCDITPWESKRR). A V repeat occupies 231 to 275 (CTSPDGKVCSNRGTCVCGECSCHDVDPTGDWGDIHGDTCECDERD). Residues 276–326 (CRAVYDRYSDDFCSGHGQCNCGRCDCRAGWYGKKCEHPKNCPLSAEESTRK) form a VI repeat. One copy of the VII repeat lies at 327–367 (CQGSSDLPCSGRGRCECGRCTCYPPGDSRVYGKTCECDDRR). The stretch at 368 to 414 (CEDLDGVVCGGRGTCSCGRCVCEKGWFGKLCQHPRKCNMTEEQSRSL) is one VIII repeat. Asn-405 is a glycosylation site (N-linked (GlcNAc...) asparagine). An IX repeat occupies 415 to 454 (CESADGTLCSGKGSCHCGKCICSGEEWYISGEFCDCDDRD). A X repeat occupies 455-494 (CDKHDGLICTGNGICSCGNCECWDGWNGNACEIWLGTEYP).

Its subcellular location is the secreted. The chain is Integrin beta-like protein 1 (Itgbl1) from Rattus norvegicus (Rat).